Reading from the N-terminus, the 354-residue chain is Uroporphyrinogen decarboxylase (354 aa).

Residues 27–31, Asp-77, Tyr-154, Thr-209, and His-327 each bind substrate; that span reads RQAGR.

It belongs to the uroporphyrinogen decarboxylase family. As to quaternary structure, homodimer.

It is found in the cytoplasm. It carries out the reaction uroporphyrinogen III + 4 H(+) = coproporphyrinogen III + 4 CO2. It participates in porphyrin-containing compound metabolism; protoporphyrin-IX biosynthesis; coproporphyrinogen-III from 5-aminolevulinate: step 4/4. Its function is as follows. Catalyzes the decarboxylation of four acetate groups of uroporphyrinogen-III to yield coproporphyrinogen-III. The protein is Uroporphyrinogen decarboxylase of Shigella dysenteriae serotype 1 (strain Sd197).